A 299-amino-acid polypeptide reads, in one-letter code: tRNA pseudouridine synthase B (299 aa).

Asp38 serves as the catalytic Nucleophile.

The protein belongs to the pseudouridine synthase TruB family. Type 1 subfamily.

It carries out the reaction uridine(55) in tRNA = pseudouridine(55) in tRNA. Responsible for synthesis of pseudouridine from uracil-55 in the psi GC loop of transfer RNAs. The polypeptide is tRNA pseudouridine synthase B (Alkaliphilus oremlandii (strain OhILAs) (Clostridium oremlandii (strain OhILAs))).